A 141-amino-acid polypeptide reads, in one-letter code: MSNKKVIKLIKLQIPGGKANPAPPIGPALGAAGVNIMGFCKEFNAATQDRPGDLLPVVITVYSDKTFTFITKQPPVSSLIKKALNLESGSKIPNRNKVGKLTQEQVTAIAEQKMKDMDVVLLESAKRMVEGTARSMGIDVE.

Belongs to the universal ribosomal protein uL11 family. In terms of assembly, part of the ribosomal stalk of the 50S ribosomal subunit. Interacts with L10 and the large rRNA to form the base of the stalk. L10 forms an elongated spine to which L12 dimers bind in a sequential fashion forming a multimeric L10(L12)X complex. In terms of processing, one or more lysine residues are methylated.

Its function is as follows. Forms part of the ribosomal stalk which helps the ribosome interact with GTP-bound translation factors. This Chlamydia felis (strain Fe/C-56) (Chlamydophila felis) protein is Large ribosomal subunit protein uL11.